The sequence spans 270 residues: MSEMEQQPICKIALGIEYDGSKYYGWQRQNEVRSVQEKLEKALSQVANEPITVFCAGRTDAGVHGTGQVVHFETRAQRKDAAWTLGVNANLPGDIAVRWVKHVPADFHARFSATARRYRYVIYNHRLRPAVLSQGVTHFHQPLDAERMQRAAQCLLGENDFTSFRAVQCQSRTPWRNVMHINVTRYGAYVVVDIKANAFVHHMVRNIVGSLMEVGAGNQPESWMAELLAAKDRTLAAATAKAEGLYLVSVDYPAHYDLPVLPMGPLFLAD.

Asp-60 (nucleophile) is an active-site residue. Positions 107–111 (FHARF) are RNA binding. Residue Tyr-118 participates in substrate binding. An interaction with tRNA region spans residues 168-172 (QCQSR).

Belongs to the tRNA pseudouridine synthase TruA family. In terms of assembly, homodimer.

It catalyses the reaction uridine(38/39/40) in tRNA = pseudouridine(38/39/40) in tRNA. In terms of biological role, formation of pseudouridine at positions 38, 39 and 40 in the anticodon stem and loop of transfer RNAs. This chain is tRNA pseudouridine synthase A, found in Klebsiella pneumoniae subsp. pneumoniae (strain ATCC 700721 / MGH 78578).